Consider the following 469-residue polypeptide: Ribulose bisphosphate carboxylase large chain (469 aa).

The residue at position 8 (lysine 8) is an N6,N6,N6-trimethyllysine. Positions 117 and 167 each coordinate substrate. Lysine 169 (proton acceptor) is an active-site residue. Position 171 (lysine 171) interacts with substrate. Residues lysine 195, aspartate 197, and glutamate 198 each contribute to the Mg(2+) site. The residue at position 195 (lysine 195) is an N6-carboxylysine. Histidine 288 functions as the Proton acceptor in the catalytic mechanism. Arginine 289, histidine 321, and serine 373 together coordinate substrate.

The protein belongs to the RuBisCO large chain family. Type I subfamily. As to quaternary structure, heterohexadecamer of 8 large chains and 8 small chains; disulfide-linked. The disulfide link is formed within the large subunit homodimers. Requires Mg(2+) as cofactor. The disulfide bond which can form in the large chain dimeric partners within the hexadecamer appears to be associated with oxidative stress and protein turnover.

It is found in the plastid. Its subcellular location is the chloroplast. The catalysed reaction is 2 (2R)-3-phosphoglycerate + 2 H(+) = D-ribulose 1,5-bisphosphate + CO2 + H2O. It catalyses the reaction D-ribulose 1,5-bisphosphate + O2 = 2-phosphoglycolate + (2R)-3-phosphoglycerate + 2 H(+). RuBisCO catalyzes two reactions: the carboxylation of D-ribulose 1,5-bisphosphate, the primary event in carbon dioxide fixation, as well as the oxidative fragmentation of the pentose substrate in the photorespiration process. Both reactions occur simultaneously and in competition at the same active site. In Coleonema pulchellum (Confetti bush), this protein is Ribulose bisphosphate carboxylase large chain.